We begin with the raw amino-acid sequence, 1034 residues long: Glycine dehydrogenase (decarboxylating), mitochondrial (1034 aa).

A mitochondrion-targeting transit peptide spans 1 to 63 (MERARRLAML…LNGFGSQVRT (63 aa)). At Lys770 the chain carries N6-(pyridoxal phosphate)lysine.

Belongs to the GcvP family. As to quaternary structure, homodimer. The glycine cleavage system is composed of four proteins: P, T, L and H. Requires pyridoxal 5'-phosphate as cofactor.

The protein resides in the mitochondrion. It catalyses the reaction N(6)-[(R)-lipoyl]-L-lysyl-[glycine-cleavage complex H protein] + glycine + H(+) = N(6)-[(R)-S(8)-aminomethyldihydrolipoyl]-L-lysyl-[glycine-cleavage complex H protein] + CO2. The glycine cleavage system catalyzes the degradation of glycine. The P protein binds the alpha-amino group of glycine through its pyridoxal phosphate cofactor; CO(2) is released and the remaining methylamine moiety is then transferred to the lipoamide cofactor of the H protein. The sequence is that of Glycine dehydrogenase (decarboxylating), mitochondrial (GDCSPA) from Flaveria trinervia (Clustered yellowtops).